Reading from the N-terminus, the 499-residue chain is Apolipoprotein N-acyltransferase (499 aa).

A run of 6 helical transmembrane segments spans residues 17 to 37 (VLAG…ALAL), 38 to 58 (LWSA…AVLL), 84 to 104 (ASIW…WAWL), 131 to 151 (IWGL…GVGG), 163 to 183 (LARW…GWWL), and 198 to 218 (RSLL…WSLL). A CN hydrolase domain is found at 232–458 (WQPAIPTRSK…EGVGLADLHF (227 aa)). Residue E273 is the Proton acceptor of the active site. Residue K322 is part of the active site. C370 serves as the catalytic Nucleophile. A helical transmembrane segment spans residues 474–494 (IGLMLFAVVGLGLSRVRSWLI).

Belongs to the CN hydrolase family. Apolipoprotein N-acyltransferase subfamily.

The protein resides in the cell inner membrane. It catalyses the reaction N-terminal S-1,2-diacyl-sn-glyceryl-L-cysteinyl-[lipoprotein] + a glycerophospholipid = N-acyl-S-1,2-diacyl-sn-glyceryl-L-cysteinyl-[lipoprotein] + a 2-acyl-sn-glycero-3-phospholipid + H(+). It participates in protein modification; lipoprotein biosynthesis (N-acyl transfer). Functionally, catalyzes the phospholipid dependent N-acylation of the N-terminal cysteine of apolipoprotein, the last step in lipoprotein maturation. In Prochlorococcus marinus (strain MIT 9313), this protein is Apolipoprotein N-acyltransferase.